The following is a 1167-amino-acid chain: White collar 1 protein (1167 aa).

Disordered regions lie at residues 1-91 and 307-355; these read MNNN…MSGG and STPA…GASQ. A compositionally biased stretch (low complexity) spans 21–57; sequence QHQQQQQQQQQQQQQQQQQQQQQQQQQQQQHQHQQQQ. Composition is skewed to polar residues over residues 70 to 91 and 307 to 325; these read TPPT…MSGG and STPA…TQTI. Positions 335–348 are enriched in low complexity; the sequence is VTNAPTPAPFTSTP. The region spanning 381–452 is the PAS 1 domain; that stretch reads KLKLGAVDMS…KREFVENNAV (72 aa). Cysteine 428 bears the S-4a-FMN cysteine mark. Residues 469-508 form the PAC 1 domain; sequence LINYRKGGKPFLNLLTMIPIPWDTEEIRYFIGFQIDLVEC. The PAS 2 domain occupies 574–644; it reads KQSWDKMLLE…RELKEAQQHT (71 aa). A PAC 2 domain is found at 650–691; the sequence is FRIRRKNSGYTWFESHGTLFNEQGKGRKCIILVGRKRPVFAL. The PAS 3 domain maps to 693-763; that stretch reads RKDLELNGGI…RTIEKARKGK (71 aa). Low complexity predominate over residues 849–861; it reads MSKSGSSDSTGAM. Disordered regions lie at residues 849-872, 918-952, 966-1047, and 1060-1167; these read MSKS…GPGQ, KKKR…PSGN, QTGR…TGST, and VNAL…GLSV. A GATA-type zinc finger spans residues 934–959; that stretch reads CANCHTRNTPEWRRGPSGNRDLCNSC. A compositionally biased stretch (polar residues) spans 968–977; sequence GRVSPRTSSR. Residues 986 to 995 are compositionally biased toward low complexity; the sequence is KKSNSPSHSS. The span at 1004 to 1033 shows a compositional bias: polar residues; that stretch reads DSPSTTTATKNSPSLRGSSTTAPGTITTDS. 2 stretches are compositionally biased toward low complexity: residues 1036–1047 and 1104–1128; these read AVASSASGTGST and QHQQ…QQHQ.

As to quaternary structure, heterodimer of wc-1 and wc-2. FMN binds covalently to cysteine after exposure to blue light and is reversed in the dark.

It localises to the nucleus. Its function is as follows. May function as a transcription factor involved in light regulation. Binds and affects blue light regulation of the al-3 gene. Wc-1 and wc-2 proteins interact via homologous PAS domains, bind to promoters of light regulated genes such as frq, and activate transcription. This is White collar 1 protein (wc-1) from Neurospora crassa (strain ATCC 24698 / 74-OR23-1A / CBS 708.71 / DSM 1257 / FGSC 987).